A 492-amino-acid polypeptide reads, in one-letter code: ERAD-associated E3 ubiquitin-protein ligase HRD1A (492 aa).

The Cytoplasmic segment spans residues 1 to 3; the sequence is MIR. Residues 4 to 24 traverse the membrane as a helical segment; it reads LRTYAGLSFMATLAVIYHAFS. Residues 25 to 40 lie on the Lumenal side of the membrane; the sequence is SRGQFYPATVYLSTSK. Residues 41 to 61 form a helical membrane-spanning segment; the sequence is ISLVLLLNMCLVLMLSLWHLV. At 62 to 98 the chain is on the cytoplasmic side; the sequence is KFVFLGSLREAEVERLNEQAWRELMEILFAITIFRQD. A helical transmembrane segment spans residues 99–119; it reads FSSGFLPLVVTLLLIKALHWL. Residues 120-135 are Lumenal-facing; the sequence is AQKRVEYIETTPSVSK. Residues 136–156 form a helical membrane-spanning segment; sequence LSHFRIVSFMGFLLLVDSLFM. Residues 157–170 lie on the Cytoplasmic side of the membrane; it reads YSSIRHLIQSRQAS. The helical transmembrane segment at 171 to 191 threads the bilayer; sequence VSLFFSFEYMILATTTVAIFV. Topologically, residues 192–221 are lumenal; sequence KYVFYVTDMLMDGQWEKKPVYTFYLELIRD. A helical transmembrane segment spans residues 222–242; that stretch reads LLHLSMYICFFFVIFMNYGVP. The Cytoplasmic segment spans residues 243 to 492; it reads LHLLRELYET…KGKSVADAAE (250 aa). The segment at 292–330 adopts an RING-type; atypical zinc-finger fold; sequence CIICREEMTNAKKLICGHLFHVHCLRSWLERQQTCPTCR. Disordered regions lie at residues 339–379 and 470–492; these read ATSA…NSLS and ETRK…DAAE. Residues 351–378 are compositionally biased toward low complexity; sequence QGSQQGTSSSGNQGSEISSSAGVSNNSL. Basic and acidic residues predominate over residues 470 to 486; it reads ETRKPESAGEPENKGKS.

This sequence belongs to the HRD1 family.

The protein resides in the endoplasmic reticulum membrane. It carries out the reaction S-ubiquitinyl-[E2 ubiquitin-conjugating enzyme]-L-cysteine + [acceptor protein]-L-lysine = [E2 ubiquitin-conjugating enzyme]-L-cysteine + N(6)-ubiquitinyl-[acceptor protein]-L-lysine.. It participates in protein modification; protein ubiquitination. Functionally, probable component of the HRD1 ubiquitin ligase complex that mediates the rapid degradation of misfolded endoplasmic reticulum (ER) proteins, a process called ER-associated degradation (ERAD). Targets the misfolded LRR receptor kinase BRI1. Functions redundantly with HRD3B. The polypeptide is ERAD-associated E3 ubiquitin-protein ligase HRD1A (Arabidopsis thaliana (Mouse-ear cress)).